Consider the following 386-residue polypeptide: MFELGETSPQNAQIKVIGIGGGGGNAIEHMIAENIDGVEFVCANTDSQALGRSNARVVLQLGDEITKGLGAGADPSVGRQAAEEARDRIREILEGTDMVFLTAGMGGGTGTGAAPIFAEVAKELGILTVAVVTKPFVFEGKKRMDVAEEGIKALGNYVDSLITIPNNKLLNVLGKNITLLNAFKAANNVLLGAVQGIADLITRPGLINVDFADVRTVMSEMGMAMMGTGVSSGENRAREAAEAAIASPLLEDVDFTGARGVLVNITAGMDLSIGEFEQVGEAVKAFASETATVVIGTVIDPDMSDELRVTVVVTGLGSHAGGGAGVPLKPVKNTKNDGTLDYHQLDRPTYMRNQEPSKRTVDLEEQRDRDFEYLDIPAFLRRLEED.

GTP contacts are provided by residues 21–25 (GGGGN), 108–110 (GTG), Glu-139, Arg-143, and Asn-187.

This sequence belongs to the FtsZ family. As to quaternary structure, homodimer. Polymerizes to form a dynamic ring structure in a strictly GTP-dependent manner. Interacts directly with several other division proteins.

It is found in the cytoplasm. Functionally, essential cell division protein that forms a contractile ring structure (Z ring) at the future cell division site. The regulation of the ring assembly controls the timing and the location of cell division. One of the functions of the FtsZ ring is to recruit other cell division proteins to the septum to produce a new cell wall between the dividing cells. Binds GTP and shows GTPase activity. The polypeptide is Cell division protein FtsZ (Coxiella burnetii (strain RSA 493 / Nine Mile phase I)).